Here is a 456-residue protein sequence, read N- to C-terminus: MRPLSSAALLSAIGAVAAQVGPWGQCGGQSYTGGTSCVSGWACVFLNDWYSQCQPGAEYTPPLCGRNDNPNIFQATTTSTSVSATAPPSSTSSSTASVSSSTSSTPIPTSSGSFVKAEGLKFNIDGETKYFAGTNAYWLPFLTNNADVDSVFDHLQQTGLKILRTWGFNDVNSVPNPGTVYFQLHDPSTSTTTINTGADGLQRLDYVVSAAEKHGIKLLIPLVNNWDDYGGMNAYIKAYGGSKTEWYTNSKIQSVYQAYIKAVVSRYRDSPAIMAWELSNEARCQGCSTDVIYNWATKTSAYIKSLDPNHMVATGEEGMGLTVDSDGSYPYSTYEGSDFEKNLAIPHIDFGVFHLYTADWGITDNSWGNRWVTSHAKLCEAAGKPCLFEEYGLKDDHCSAAVVWQKTSLTTAGMAADLFWQYGQTLSTGQSPNDRYTIYYGTSDWQCAVIDHVSRI.

Residues 1–18 form the signal peptide; the sequence is MRPLSSAALLSAIGAVAA. The CBM1 domain occupies 19-54; that stretch reads QVGPWGQCGGQSYTGGTSCVSGWACVFLNDWYSQCQ. The segment at 79-110 is disordered; it reads STSVSATAPPSSTSSSTASVSSSTSSTPIPTS. Positions 79-113 are ser-rich linker; the sequence is STSVSATAPPSSTSSSTASVSSSTSSTPIPTSSGS. Positions 114 to 456 are catalytic; it reads FVKAEGLKFN…CAVIDHVSRI (343 aa). Substrate is bound by residues Trp166 and Asn280. Glu281 functions as the Proton donor in the catalytic mechanism. A substrate-binding site is contributed by Tyr356. Glu390 serves as the catalytic Nucleophile. Trp420 provides a ligand contact to substrate.

It belongs to the glycosyl hydrolase 5 (cellulase A) family.

Its subcellular location is the secreted. The catalysed reaction is Random hydrolysis of (1-&gt;4)-beta-D-mannosidic linkages in mannans, galactomannans and glucomannans.. In terms of biological role, endo-1,4-mannanase, a crucial enzyme for depolymerization of seed galactomannans and wood galactoglucomannans. This Neosartorya fischeri (strain ATCC 1020 / DSM 3700 / CBS 544.65 / FGSC A1164 / JCM 1740 / NRRL 181 / WB 181) (Aspergillus fischerianus) protein is Probable mannan endo-1,4-beta-mannosidase F (manF).